Here is a 264-residue protein sequence, read N- to C-terminus: NAD-capped RNA hydrolase NudC (264 aa).

Arg70 contacts substrate. Zn(2+) contacts are provided by Cys99 and Cys102. Glu112 is a substrate binding site. Zn(2+)-binding residues include Cys117 and Cys122. Tyr127 is a substrate binding site. Residues 128-257 form the Nudix hydrolase domain; the sequence is PVICPSIIVA…TIALKLINAT (130 aa). Ala166, Glu182, and Glu186 together coordinate a divalent metal cation. The Nudix box signature appears at 167–188; the sequence is GFVEIGESFEQTVEREVFEETG. 200–207 is a substrate binding site; that stretch reads QPWAFPNS. A divalent metal cation is bound at residue Glu227. Position 250 (Ala250) interacts with substrate.

The protein belongs to the Nudix hydrolase family. NudC subfamily. In terms of assembly, homodimer. Mg(2+) serves as cofactor. It depends on Mn(2+) as a cofactor. The cofactor is Zn(2+).

The catalysed reaction is a 5'-end NAD(+)-phospho-ribonucleoside in mRNA + H2O = a 5'-end phospho-adenosine-phospho-ribonucleoside in mRNA + beta-nicotinamide D-ribonucleotide + 2 H(+). It catalyses the reaction NAD(+) + H2O = beta-nicotinamide D-ribonucleotide + AMP + 2 H(+). The enzyme catalyses NADH + H2O = reduced beta-nicotinamide D-ribonucleotide + AMP + 2 H(+). Its function is as follows. mRNA decapping enzyme that specifically removes the nicotinamide adenine dinucleotide (NAD) cap from a subset of mRNAs by hydrolyzing the diphosphate linkage to produce nicotinamide mononucleotide (NMN) and 5' monophosphate mRNA. The NAD-cap is present at the 5'-end of some mRNAs and stabilizes RNA against 5'-processing. Has preference for mRNAs with a 5'-end purine. Catalyzes the hydrolysis of a broad range of dinucleotide pyrophosphates. The chain is NAD-capped RNA hydrolase NudC from Actinobacillus succinogenes (strain ATCC 55618 / DSM 22257 / CCUG 43843 / 130Z).